The primary structure comprises 55 residues: Spermatid nuclear transition protein 1 (55 aa).

Residues 1–42 (MSTSRKLKTHGMRRGKNRAPHKGVKRGGSKRKYRKSVLKSRK) show a composition bias toward basic residues. The disordered stretch occupies residues 1–55 (MSTSRKLKTHGMRRGKNRAPHKGVKRGGSKRKYRKSVLKSRKRGDDASRNYRSHL). 2 positions are modified to phosphoserine: S36 and S40.

It belongs to the nuclear transition protein 1 family. Testis-specific.

The protein resides in the nucleus. The protein localises to the chromosome. In terms of biological role, plays a key role in the replacement of histones to protamine in the elongating spermatids of mammals. In condensing spermatids, loaded onto the nucleosomes, where it promotes the recruitment and processing of protamines, which are responsible for histone eviction. The histone H2AB1-H2BC1/TH2B dimer is required for loading of TNP1 onto chromatin. This chain is Spermatid nuclear transition protein 1, found in Mus musculus (Mouse).